The following is a 457-amino-acid chain: Bifunctional F420 biosynthesis protein FbiB (457 aa).

The tract at residues 1 to 253 (MTSSDSHRSA…NGPDDLFWLG (253 aa)) is coenzyme F420:L-glutamate ligase. GTP is bound by residues 29-32 (LPEF), Ser59, and Lys64. Asp118 contributes to the a divalent metal cation binding site. Asn121 serves as a coordination point for GTP. A divalent metal cation-binding residues include Asp159 and Thr160. A dehydro-coenzyme F420-0 reductase region spans residues 254–457 (TTEALELGRQ…VRVADLLLRK (204 aa)). Residues 269-273 (RRSVR) and Ala297 contribute to the FMN site. Position 329 (Asp329) interacts with coenzyme F420-(gamma-Glu)n. FMN contacts are provided by Gly408 and Arg445.

This sequence in the N-terminal section; belongs to the CofE family. The cofactor is Mg(2+). It depends on Mn(2+) as a cofactor. K(+) serves as cofactor.

It carries out the reaction oxidized coenzyme F420-0 + GTP + L-glutamate = oxidized coenzyme F420-1 + GDP + phosphate + H(+). It catalyses the reaction oxidized coenzyme F420-1 + GTP + L-glutamate = oxidized coenzyme F420-2 + GDP + phosphate + H(+). The catalysed reaction is oxidized coenzyme F420-(gamma-L-Glu)(n) + GTP + L-glutamate = oxidized coenzyme F420-(gamma-L-Glu)(n+1) + GDP + phosphate + H(+). The enzyme catalyses oxidized coenzyme F420-0 + FMN + H(+) = dehydro coenzyme F420-0 + FMNH2. Its pathway is cofactor biosynthesis; coenzyme F420 biosynthesis. In terms of biological role, bifunctional enzyme that catalyzes the GTP-dependent successive addition of multiple gamma-linked L-glutamates to the L-lactyl phosphodiester of 7,8-didemethyl-8-hydroxy-5-deazariboflavin (F420-0) to form polyglutamated F420 derivatives, and the FMNH2-dependent reduction of dehydro-F420-0 to form F420-0. This is Bifunctional F420 biosynthesis protein FbiB from Mycobacterium leprae (strain TN).